The sequence spans 89 residues: Acylphosphatase (89 aa).

Residues 3 to 89 form the Acylphosphatase-like domain; that stretch reads ALEIYVSGNV…ENYESFEVAY (87 aa). Active-site residues include Arg-18 and Asn-36.

It belongs to the acylphosphatase family.

The catalysed reaction is an acyl phosphate + H2O = a carboxylate + phosphate + H(+). The polypeptide is Acylphosphatase (acyP) (Archaeoglobus fulgidus (strain ATCC 49558 / DSM 4304 / JCM 9628 / NBRC 100126 / VC-16)).